A 208-amino-acid chain; its full sequence is MTNKDESVEKNTESTVEETNIKQNIDDSVEQAEESKGHLQDEAIEETSDENVIEEIDPKDQKINELQQLADENEEKYLRLYAEFENYKRRIQKENEINKTYQAQRVLTDILPAIDNIERALQIEGDDETFKSLQKGVQMVHESLINALKDNGLEVIKTEGEAFDPNIHQAVVQDDNPDFESGEITQELQKGYKLKDRVLRPSMVKVNQ.

The segment covering 1-12 has biased composition (basic and acidic residues); that stretch reads MTNKDESVEKNT. The disordered stretch occupies residues 1-59; it reads MTNKDESVEKNTESTVEETNIKQNIDDSVEQAEESKGHLQDEAIEETSDENVIEEIDPK. The span at 13–23 shows a compositional bias: polar residues; sequence ESTVEETNIKQ. A compositionally biased stretch (acidic residues) spans 42–55; the sequence is EAIEETSDENVIEE.

Belongs to the GrpE family. Homodimer.

The protein localises to the cytoplasm. Participates actively in the response to hyperosmotic and heat shock by preventing the aggregation of stress-denatured proteins, in association with DnaK and GrpE. It is the nucleotide exchange factor for DnaK and may function as a thermosensor. Unfolded proteins bind initially to DnaJ; upon interaction with the DnaJ-bound protein, DnaK hydrolyzes its bound ATP, resulting in the formation of a stable complex. GrpE releases ADP from DnaK; ATP binding to DnaK triggers the release of the substrate protein, thus completing the reaction cycle. Several rounds of ATP-dependent interactions between DnaJ, DnaK and GrpE are required for fully efficient folding. The protein is Protein GrpE of Staphylococcus aureus (strain Mu3 / ATCC 700698).